The following is a 74-amino-acid chain: Somatostatin-2 (74 aa).

Residues 1 to 46 (ARGAGLLSQDWSAVEDLLAQMSLPEADAQREAEVVSVATGGRLNLE) constitute a propeptide that is removed on maturation. Cysteine 63 and cysteine 74 are joined by a disulfide.

The protein belongs to the somatostatin family.

The protein localises to the secreted. In terms of biological role, somatostatin inhibits the release of somatotropin. The protein is Somatostatin-2 (sst2) of Myoxocephalus scorpius (Shorthorn sculpin).